We begin with the raw amino-acid sequence, 1064 residues long: Carbamoyl phosphate synthase large chain (1064 aa).

Positions 1–401 (MPKRNDIKKI…SLLKAVRSLE (401 aa)) are carboxyphosphate synthetic domain. Arginine 129, arginine 169, glycine 175, glycine 176, glutamate 208, isoleucine 210, glutamate 215, glycine 241, valine 242, histidine 243, glutamine 284, and glutamate 298 together coordinate ATP. The region spanning 133 to 327 (KELCERIGEP…IAKMSAKIAI (195 aa)) is the ATP-grasp 1 domain. 3 residues coordinate Mg(2+): glutamine 284, glutamate 298, and asparagine 300. Glutamine 284, glutamate 298, and asparagine 300 together coordinate Mn(2+). Residues 402–546 (IGVFHNDLQE…YSTYEWENES (145 aa)) form an oligomerization domain region. Positions 547-929 (KRSSKEKIIV…ALYKSFEAAK (383 aa)) are carbamoyl phosphate synthetic domain. The 191-residue stretch at 671–861 (EKALQDLEIP…MAQLATQMIL (191 aa)) folds into the ATP-grasp 2 domain. ATP-binding residues include arginine 707, serine 746, leucine 748, glutamate 752, glycine 777, valine 778, histidine 779, serine 780, glutamine 820, and glutamate 832. Residues glutamine 820, glutamate 832, and asparagine 834 each coordinate Mg(2+). 3 residues coordinate Mn(2+): glutamine 820, glutamate 832, and asparagine 834. The MGS-like domain occupies 930-1064 (LHMADYGSVL…QSRSFTTKNI (135 aa)). An allosteric domain region spans residues 930–1064 (LHMADYGSVL…QSRSFTTKNI (135 aa)).

This sequence belongs to the CarB family. In terms of assembly, composed of two chains; the small (or glutamine) chain promotes the hydrolysis of glutamine to ammonia, which is used by the large (or ammonia) chain to synthesize carbamoyl phosphate. Tetramer of heterodimers (alpha,beta)4. Mg(2+) serves as cofactor. Requires Mn(2+) as cofactor.

The catalysed reaction is hydrogencarbonate + L-glutamine + 2 ATP + H2O = carbamoyl phosphate + L-glutamate + 2 ADP + phosphate + 2 H(+). It carries out the reaction hydrogencarbonate + NH4(+) + 2 ATP = carbamoyl phosphate + 2 ADP + phosphate + 2 H(+). It participates in amino-acid biosynthesis; L-arginine biosynthesis; carbamoyl phosphate from bicarbonate: step 1/1. It functions in the pathway pyrimidine metabolism; UMP biosynthesis via de novo pathway; (S)-dihydroorotate from bicarbonate: step 1/3. In terms of biological role, large subunit of the glutamine-dependent carbamoyl phosphate synthetase (CPSase). CPSase catalyzes the formation of carbamoyl phosphate from the ammonia moiety of glutamine, carbonate, and phosphate donated by ATP, constituting the first step of 2 biosynthetic pathways, one leading to arginine and/or urea and the other to pyrimidine nucleotides. The large subunit (synthetase) binds the substrates ammonia (free or transferred from glutamine from the small subunit), hydrogencarbonate and ATP and carries out an ATP-coupled ligase reaction, activating hydrogencarbonate by forming carboxy phosphate which reacts with ammonia to form carbamoyl phosphate. The chain is Carbamoyl phosphate synthase large chain from Lactococcus lactis subsp. lactis (strain IL1403) (Streptococcus lactis).